A 432-amino-acid polypeptide reads, in one-letter code: D-amino acid dehydrogenase (432 aa).

Val-3–Trp-17 is a binding site for FAD.

It belongs to the DadA oxidoreductase family. The cofactor is FAD.

The catalysed reaction is a D-alpha-amino acid + A + H2O = a 2-oxocarboxylate + AH2 + NH4(+). It participates in amino-acid degradation; D-alanine degradation; NH(3) and pyruvate from D-alanine: step 1/1. Oxidative deamination of D-amino acids. This Escherichia coli O45:K1 (strain S88 / ExPEC) protein is D-amino acid dehydrogenase.